Consider the following 298-residue polypeptide: Glyoxalase domain-containing protein 4 (298 aa).

In terms of domain architecture, VOC 1 spans 5-130 (RALHFVFKVG…GGYKFYLQDR (126 aa)). K109 carries the N6-succinyllysine modification. S131 bears the Phosphoserine mark. One can recognise a VOC 2 domain in the interval 137-258 (PVLKVTLAVS…DGHEICFVGD (122 aa)). An N6-succinyllysine modification is found at K273.

The protein belongs to the glyoxalase I family. Interacts with NUDT9.

Its subcellular location is the mitochondrion. This chain is Glyoxalase domain-containing protein 4 (Glod4), found in Rattus norvegicus (Rat).